The chain runs to 634 residues: Proline and serine-rich protein 3 (634 aa).

Disordered stretches follow at residues 1-69 (MFPK…LIDN), 81-142 (FRQA…TSLA), 185-242 (DASS…ATLK), 368-455 (VPPT…FEGP), and 472-534 (FPDS…TAPK). Residues 15–24 (RTGATRSQRP) show a composition bias toward polar residues. Composition is skewed to low complexity over residues 40–56 (ESWP…STTE), 128–140 (VTGP…SSTS), and 185–202 (DASS…SPSS). Residues 203–215 (VTFNPDSNKSSNP) show a composition bias toward polar residues. The segment covering 368–377 (VPPTSTSTTP) has biased composition (low complexity). Over residues 378 to 399 (APTPTPQVCIPGPPTSAPPPCA) the composition is skewed to pro residues. The segment covering 436–448 (VSTSSHQKTTVPD) has biased composition (polar residues). A compositionally biased stretch (basic and acidic residues) spans 503-515 (PESRRGSKTESRK). S588 carries the post-translational modification Phosphoserine.

The protein resides in the cytoplasm. Its subcellular location is the cytoskeleton. It localises to the microtubule organizing center. It is found in the centrosome. The chain is Proline and serine-rich protein 3 (Proser3) from Mus musculus (Mouse).